We begin with the raw amino-acid sequence, 257 residues long: 3-deoxy-manno-octulosonate cytidylyltransferase (257 aa).

This sequence belongs to the KdsB family.

It localises to the cytoplasm. The catalysed reaction is 3-deoxy-alpha-D-manno-oct-2-ulosonate + CTP = CMP-3-deoxy-beta-D-manno-octulosonate + diphosphate. It functions in the pathway nucleotide-sugar biosynthesis; CMP-3-deoxy-D-manno-octulosonate biosynthesis; CMP-3-deoxy-D-manno-octulosonate from 3-deoxy-D-manno-octulosonate and CTP: step 1/1. The protein operates within bacterial outer membrane biogenesis; lipopolysaccharide biosynthesis. Functionally, activates KDO (a required 8-carbon sugar) for incorporation into bacterial lipopolysaccharide in Gram-negative bacteria. This is 3-deoxy-manno-octulosonate cytidylyltransferase from Xylella fastidiosa (strain M23).